We begin with the raw amino-acid sequence, 387 residues long: Eukaryotic translation initiation factor 3 subunit M (387 aa).

A PCI domain is found at arginine 181 to histidine 340.

The protein belongs to the eIF-3 subunit M family. Component of the eukaryotic translation initiation factor 3 (eIF-3) complex. The eIF-3 complex interacts with pix.

It is found in the cytoplasm. The protein resides in the golgi apparatus. Functionally, component of the eukaryotic translation initiation factor 3 (eIF-3) complex, which is involved in protein synthesis of a specialized repertoire of mRNAs and, together with other initiation factors, stimulates binding of mRNA and methionyl-tRNAi to the 40S ribosome. The eIF-3 complex specifically targets and initiates translation of a subset of mRNAs involved in cell proliferation. The sequence is that of Eukaryotic translation initiation factor 3 subunit M from Drosophila willistoni (Fruit fly).